We begin with the raw amino-acid sequence, 485 residues long: N-succinylglutamate 5-semialdehyde dehydrogenase (485 aa).

Residue 220–225 coordinates NAD(+); sequence GSANTG. Active-site residues include Glu243 and Cys278.

This sequence belongs to the aldehyde dehydrogenase family. AstD subfamily.

It catalyses the reaction N-succinyl-L-glutamate 5-semialdehyde + NAD(+) + H2O = N-succinyl-L-glutamate + NADH + 2 H(+). It participates in amino-acid degradation; L-arginine degradation via AST pathway; L-glutamate and succinate from L-arginine: step 4/5. In terms of biological role, catalyzes the NAD-dependent reduction of succinylglutamate semialdehyde into succinylglutamate. The sequence is that of N-succinylglutamate 5-semialdehyde dehydrogenase from Vibrio campbellii (strain ATCC BAA-1116).